A 396-amino-acid chain; its full sequence is Elongation factor Tu (396 aa).

Residues 10 to 206 (KPHCNIGTIG…AVDAYIPQPE (197 aa)) form the tr-type G domain. A G1 region spans residues 19-26 (GHVDHGKT). 19 to 26 (GHVDHGKT) contributes to the GTP binding site. Thr26 serves as a coordination point for Mg(2+). The segment at 60–64 (GITIS) is G2. The interval 81-84 (DCPG) is G3. GTP is bound by residues 81-85 (DCPGH) and 136-139 (NKCD). The tract at residues 136 to 139 (NKCD) is G4. The interval 174-176 (SAL) is G5.

This sequence belongs to the TRAFAC class translation factor GTPase superfamily. Classic translation factor GTPase family. EF-Tu/EF-1A subfamily. Monomer.

Its subcellular location is the cytoplasm. The enzyme catalyses GTP + H2O = GDP + phosphate + H(+). In terms of biological role, GTP hydrolase that promotes the GTP-dependent binding of aminoacyl-tRNA to the A-site of ribosomes during protein biosynthesis. This is Elongation factor Tu from Nitrobacter hamburgensis (strain DSM 10229 / NCIMB 13809 / X14).